Reading from the N-terminus, the 96-residue chain is Small ribosomal subunit protein bS6c (96 aa).

Belongs to the bacterial ribosomal protein bS6 family.

It is found in the plastid. It localises to the chloroplast. Binds together with bS18 to 16S ribosomal RNA. In Trieres chinensis (Marine centric diatom), this protein is Small ribosomal subunit protein bS6c (rps6).